The chain runs to 286 residues: MFNWIKTFMLMAAITALFIVIGGMIGGRSGMMLALLFALGMNFFSYWFSDKMVLRMYNAQEVNETSAPQFYRMVQELAGRAGLPMPRVYLIDEAQPNAFATGRNPEHAAVAATTGILNILSERELRGVMAHELAHVQHRDILISTISATMAGAISALANFAVFFGGRDSEGRPANPIAGIAVAILAPLAAAMIQMAISRAREFEADRGGATISGDPQALASALDKIHRYAAGIPFAAAEAHPATAQMMIMNPLHGGGLANLFSTHPATEERIARLMQMAQTGQYPA.

2 helical membrane passes run threonine 7 to glycine 27 and serine 29 to serine 49. Histidine 131 provides a ligand contact to Zn(2+). The active site involves glutamate 132. Histidine 135 lines the Zn(2+) pocket. The next 2 helical transmembrane spans lie at isoleucine 146–glycine 166 and isoleucine 177–isoleucine 197. Glutamate 202 contacts Zn(2+).

This sequence belongs to the peptidase M48B family. It depends on Zn(2+) as a cofactor.

It localises to the cell inner membrane. The sequence is that of Protease HtpX homolog from Ralstonia pickettii (strain 12J).